The chain runs to 767 residues: 5-methyltetrahydropteroyltriglutamate--homocysteine methyltransferase (767 aa).

Lysine 126 contributes to the 5-methyltetrahydropteroyltri-L-glutamate binding site. L-homocysteine is bound by residues 445–447 and glutamate 498; that span reads IGS. Residues 445-447 and glutamate 498 each bind L-methionine; that span reads IGS. Residues 529 to 530 and tryptophan 575 contribute to the 5-methyltetrahydropteroyltri-L-glutamate site; that span reads RC. Aspartate 613 serves as a coordination point for L-homocysteine. Aspartate 613 is a binding site for L-methionine. 5-methyltetrahydropteroyltri-L-glutamate is bound at residue glutamate 619. Residues histidine 655, cysteine 657, and glutamate 679 each contribute to the Zn(2+) site. Histidine 708 acts as the Proton donor in catalysis. Cysteine 740 lines the Zn(2+) pocket.

The protein belongs to the vitamin-B12 independent methionine synthase family. The cofactor is Zn(2+).

The catalysed reaction is 5-methyltetrahydropteroyltri-L-glutamate + L-homocysteine = tetrahydropteroyltri-L-glutamate + L-methionine. It participates in amino-acid biosynthesis; L-methionine biosynthesis via de novo pathway; L-methionine from L-homocysteine (MetE route): step 1/1. Functionally, catalyzes the transfer of a methyl group from 5-methyltetrahydrofolate to homocysteine resulting in methionine formation. The sequence is that of 5-methyltetrahydropteroyltriglutamate--homocysteine methyltransferase from Psychromonas ingrahamii (strain DSM 17664 / CCUG 51855 / 37).